The primary structure comprises 375 residues: Alcohol dehydrogenase 6 (375 aa).

Ser23 bears the Phosphoserine mark. 7 residues coordinate Zn(2+): Cys47, His69, Cys99, Cys102, Cys105, Cys113, and Cys175. NAD(+) is bound by residues 200–205 (GLGGVG), Asp224, Lys229, 293–295 (VGL), and Arg370.

It belongs to the zinc-containing alcohol dehydrogenase family. Class-V subfamily. In terms of assembly, dimer. Requires Zn(2+) as cofactor.

The protein resides in the cytoplasm. The enzyme catalyses a primary alcohol + NAD(+) = an aldehyde + NADH + H(+). It carries out the reaction a secondary alcohol + NAD(+) = a ketone + NADH + H(+). Alcohol dehydrogenase. Catalyzes the NAD-dependent oxidation of primary alcohols to the corresponding aldehydes. Oxidizes secondary alcohols to the corresponding ketones. The protein is Alcohol dehydrogenase 6 (ADH6) of Pongo abelii (Sumatran orangutan).